A 397-amino-acid polypeptide reads, in one-letter code: DNA-directed RNA polymerase subunit Rpo1C (397 aa).

It belongs to the RNA polymerase beta' chain family. As to quaternary structure, part of the RNA polymerase complex.

The protein localises to the cytoplasm. The enzyme catalyses RNA(n) + a ribonucleoside 5'-triphosphate = RNA(n+1) + diphosphate. DNA-dependent RNA polymerase (RNAP) catalyzes the transcription of DNA into RNA using the four ribonucleoside triphosphates as substrates. Forms part of the jaw domain. This is DNA-directed RNA polymerase subunit Rpo1C from Methanococcus aeolicus (strain ATCC BAA-1280 / DSM 17508 / OCM 812 / Nankai-3).